The sequence spans 280 residues: uncharacterized protein (280 aa).

6 consecutive transmembrane segments (helical) span residues 46 to 66 (LIFLLALPFLTLPFDSYFVCT), 81 to 101 (IACSYFVFPLISYQIWCFLIP), 114 to 134 (FFYLSGSCFFLFLFLTFSWVV), 137 to 157 (VWHFLYFVGATSTNSLMIKLQ), 170 to 190 (ILFISSVCSQVPVIVICLLEL), and 225 to 245 (IVACFLISLIIELAIFVALIV). Positions 258-280 (ESGSIEKKNKSSPPPRTWQSNYQ) are disordered.

Belongs to the TatC family.

It localises to the mitochondrion membrane. This is an uncharacterized protein from Arabidopsis thaliana (Mouse-ear cress).